The primary structure comprises 128 residues: Modulator protein MzrA (128 aa).

At 1-13 the chain is on the cytoplasmic side; that stretch reads MLALLRPYLSTRV. The chain crosses the membrane as a helical span at residues 14–34; sequence LCVLVVCFSALMLVAFIPTLF. Residues 35-128 lie on the Periplasmic side of the membrane; sequence RNDTALQIRA…RLSLRKQSVG (94 aa).

This sequence belongs to the MzrA family. In terms of assembly, interacts with EnvZ.

The protein resides in the cell inner membrane. Its function is as follows. Modulates the activity of the EnvZ/OmpR two-component regulatory system, probably by directly modulating EnvZ enzymatic activity and increasing stability of phosphorylated OmpR. This chain is Modulator protein MzrA, found in Erwinia billingiae (strain Eb661).